Reading from the N-terminus, the 956-residue chain is MTNNNLLAQLNDNLDFISRHNGPDRTQQQHMLDTLKVDSIEQMIDKTVPDNIRLLQPMALAKPQSEIEMLATLKGIASKNKVNRSYIGQGYYDTHVPHVILRNVFENPGWYTAYTPYQPEISQGRLEALLNFQQMITDLTAMELSNASLLDEATAAAEAMSLCKRASKNKSNVFFVSDDVHPQTLDVINTRAKYFSFEVVVAPCSELENHDVFGALLQYPGTTGQVHNLEKIIEQAHSKKTLVAVAADLLALTVLKAPGEMGADVVIGSAQRFGVPMGYGGPHAAFMATKEKYKRTIPGRVIGVSIDSKGKPALRMAMQTREQHIRREKANSNICTAQALLANMASFYAVYHGPQGLRKMGRRVNRLTSVLAAGLQKAGIELVHNDFFDTITLQTNEKTDAIYQRALAADLNLRLLPDQLGISLDETTTSADVEALWLAITEQSFNVDDIEQTLSAEFCNIPADCQRTSEYLSHPVFNSYHSETRMLRYLKSLENKDFSLTHGMIPLGSCTMKLNATAQMIPVTWPEFSRMHPFAPSDQCTGYETLAESFSDMLIEITGYDAFSLQPNSGAQGEYAGLIAIQRYHASRGEDYRNICLIPSSAHGTNPASASMVSMRIVLVNCDKEGNVDLDDLKEKINLHRDQLSAMMITYPSTHGVYEESIKEICELIHEAGGQVYLDGANMNAQVGLTSPGFIGADVSHLNLHKTFCIPHGGGGPGMGPIGVKSHLADFLPGHSVTNTVGAVSATALGSASILPISWAYIALMGAEGLKSATELAILNANYIMEKLSPHYPILFRGKQGRVAHECIIDLRPLKESSGISEEDVAKRLMDFGFHAPTMSFPVAGTLMIEPTESESLEELDKFIDALITIRHEIAKVEEGTWTLADNPLVNAPHTLNDLTGSDWPRAYSRLTACYPSSCPSQPKFWPTTNRIDNVYGDRNLICSCPPIESYQSTDT.

Lys-706 is subject to N6-(pyridoxal phosphate)lysine.

It belongs to the GcvP family. The glycine cleavage system is composed of four proteins: P, T, L and H. It depends on pyridoxal 5'-phosphate as a cofactor.

It catalyses the reaction N(6)-[(R)-lipoyl]-L-lysyl-[glycine-cleavage complex H protein] + glycine + H(+) = N(6)-[(R)-S(8)-aminomethyldihydrolipoyl]-L-lysyl-[glycine-cleavage complex H protein] + CO2. Its function is as follows. The glycine cleavage system catalyzes the degradation of glycine. The P protein binds the alpha-amino group of glycine through its pyridoxal phosphate cofactor; CO(2) is released and the remaining methylamine moiety is then transferred to the lipoamide cofactor of the H protein. This is Glycine dehydrogenase (decarboxylating) 2 from Colwellia psychrerythraea (strain 34H / ATCC BAA-681) (Vibrio psychroerythus).